The following is a 164-amino-acid chain: B-phycoerythrin alpha chain (164 aa).

2 residues coordinate (2R,3E)-phycoerythrobilin: cysteine 82 and cysteine 139.

The protein belongs to the phycobiliprotein family. In terms of assembly, heteromer of 6 alpha, 6 beta and one gamma chain. Post-translationally, contains two covalently linked bilin chromophores.

It localises to the plastid. The protein resides in the chloroplast thylakoid membrane. In terms of biological role, light-harvesting photosynthetic bile pigment-protein from the phycobiliprotein complex. This chain is B-phycoerythrin alpha chain (cpeA), found in Porphyridium sordidum (Red alga).